Consider the following 387-residue polypeptide: MAKRDYYEVLGLQKGASDDEIKRAFRKMAMKYHPDRNPGDKEAEENFKEVNEAYDVLKDPDKKAKYDQFGHAAFDGSGGFGGGGFGGFDAGGFDFSEMGGFGDIFESFFGGGFGGGSSRRRNAPQRGADLEYRLNITFEEAVFGCEKEISITRTENCETCHGTGAKAGTSPKTCPKCNGSGQIRVQRQTPLGSFVSTTTCDQCGGTGKVIEDPCPDCKGKGTVRKNRKITVKIPAGVDTGNIIPLRGQGEQGANNGPAGDLYIRVNVAPSKIFRREGSDIYYDYKISMAKAALGAEITVPTVDGNVKYKVPAGTQPGTKFRLKGKGVPHVNGGGRGNQYVHMVVEVPKHLNKEQEEALKAFMKASGESVDDIDEKDEGFFSKFKKKK.

The J domain occupies 5–70; that stretch reads DYYEVLGLQK…DKKAKYDQFG (66 aa). Residues 144-226 form a CR-type zinc finger; sequence GCEKEISITR…CKGKGTVRKN (83 aa). 8 residues coordinate Zn(2+): C157, C160, C174, C177, C200, C203, C214, and C217. 4 CXXCXGXG motif repeats span residues 157 to 164, 174 to 181, 200 to 207, and 214 to 221; these read CETCHGTG, CPKCNGSG, CDQCGGTG, and CPDCKGKG.

Belongs to the DnaJ family. Homodimer. Requires Zn(2+) as cofactor.

Its subcellular location is the cytoplasm. Functionally, participates actively in the response to hyperosmotic and heat shock by preventing the aggregation of stress-denatured proteins and by disaggregating proteins, also in an autonomous, DnaK-independent fashion. Unfolded proteins bind initially to DnaJ; upon interaction with the DnaJ-bound protein, DnaK hydrolyzes its bound ATP, resulting in the formation of a stable complex. GrpE releases ADP from DnaK; ATP binding to DnaK triggers the release of the substrate protein, thus completing the reaction cycle. Several rounds of ATP-dependent interactions between DnaJ, DnaK and GrpE are required for fully efficient folding. Also involved, together with DnaK and GrpE, in the DNA replication of plasmids through activation of initiation proteins. This Clostridium perfringens (strain 13 / Type A) protein is Chaperone protein DnaJ.